We begin with the raw amino-acid sequence, 280 residues long: 2,3,4,5-tetrahydropyridine-2,6-dicarboxylate N-succinyltransferase (280 aa).

Substrate contacts are provided by Arg-107 and Asp-144.

The protein belongs to the transferase hexapeptide repeat family. As to quaternary structure, homotrimer.

The protein localises to the cytoplasm. It catalyses the reaction (S)-2,3,4,5-tetrahydrodipicolinate + succinyl-CoA + H2O = (S)-2-succinylamino-6-oxoheptanedioate + CoA. The protein operates within amino-acid biosynthesis; L-lysine biosynthesis via DAP pathway; LL-2,6-diaminopimelate from (S)-tetrahydrodipicolinate (succinylase route): step 1/3. In Granulibacter bethesdensis (strain ATCC BAA-1260 / CGDNIH1), this protein is 2,3,4,5-tetrahydropyridine-2,6-dicarboxylate N-succinyltransferase.